The following is a 436-amino-acid chain: GTPase Der (436 aa).

EngA-type G domains lie at 4–165 and 172–347; these read NVIA…NFDS and FKLS…ENLE. GTP is bound by residues 10 to 17, 57 to 61, 119 to 122, 178 to 185, 225 to 229, and 290 to 293; these read GKPNVGKS, DTGGI, NKLD, GQPNSGKS, DTAGI, and NKWD. One can recognise a KH-like domain in the interval 348 to 432; it reads REIKPSVLTN…PINIIFKNKS (85 aa).

This sequence belongs to the TRAFAC class TrmE-Era-EngA-EngB-Septin-like GTPase superfamily. EngA (Der) GTPase family. As to quaternary structure, associates with the 50S ribosomal subunit.

In terms of biological role, GTPase that plays an essential role in the late steps of ribosome biogenesis. The protein is GTPase Der of Mycoplasmopsis agalactiae (strain NCTC 10123 / CIP 59.7 / PG2) (Mycoplasma agalactiae).